Consider the following 118-residue polypeptide: Large ribosomal subunit protein bL20 (118 aa).

The protein belongs to the bacterial ribosomal protein bL20 family. Part of the 50S ribosomal subunit. Contacts proteins L13 and L21.

Functionally, binds directly to 23S rRNA, probably serving to organize its structure. The chain is Large ribosomal subunit protein bL20 (rplT) from Deinococcus radiodurans (strain ATCC 13939 / DSM 20539 / JCM 16871 / CCUG 27074 / LMG 4051 / NBRC 15346 / NCIMB 9279 / VKM B-1422 / R1).